The sequence spans 339 residues: MKVESVVKEETKKPERKIKLAIAKPEDYSNKNVILEKEEELICPVCGSKSIIKDYERAEIVCEMCGCVLQQNLFDVGPEWRAFDHEQRVKRSRVGAPMTYTIHDKGLSTVIDWRNKDSYGKDISADKRAQLYRLRKWQRRIRVSDASERNLAFALSELDRIASKLGLPRNVRENAAVLYRGAVEKGLIRGRSIEGVAAAALYAACRRCKVPRTLDEIAEVSRVDRKEIGRTYRFISRELNIRLAPTNPVDYVPRFASELKLPGEVESKAISILQKAGEKGLTSSRGPTGVAAAAIYIASVLQGTRRTQREVADVAGVTEVTIRNRYKELTEHLDIDVTL.

Residues 39–70 (EELICPVCGSKSIIKDYERAEIVCEMCGCVLQ) form a TFIIB-type zinc finger. Positions 43, 46, 62, and 65 each coordinate Zn(2+). 2 repeat units span residues 156 to 239 (SELD…SREL) and 250 to 331 (DYVP…ELTE).

The protein belongs to the TFIIB family.

Its function is as follows. Stabilizes TBP binding to an archaeal box-A promoter. Also responsible for recruiting RNA polymerase II to the pre-initiation complex (DNA-TBP-TFIIB). This is Transcription initiation factor IIB from Methanococcus maripaludis (strain C5 / ATCC BAA-1333).